A 553-amino-acid polypeptide reads, in one-letter code: Undecaprenyl phosphate-alpha-4-amino-4-deoxy-L-arabinose arabinosyl transferase (553 aa).

The next 12 membrane-spanning stretches (helical) occupy residues 8 to 28, 83 to 103, 111 to 131, 132 to 152, 176 to 196, 204 to 224, 255 to 275, 288 to 308, 317 to 337, 350 to 370, 380 to 400, and 407 to 427; these read LVLLLGFTLLYLLPLEFRALW, VRFGAVFSTTLSALMVAWLAF, VAVLSGVIFLTCLLVYGVGTY, AVLDPMITLWLVAAMCSFWLG, VMTKGFLALAVPVLGVLPWVI, VLLFGPLAIISATLITLPWAL, APFWYYIPFLIAGCLPWVALL, IESGTLYLLGWVVMPLLFFSI, ILPCFAPLAILLARHATQLVA, TVFGAVCALIVLLVLAPWGIA, VLKVIQASIAFLVWALVGYLT, and LWQWAALCPLGIALLVGGMIP.

The protein belongs to the glycosyltransferase 83 family.

The protein resides in the cell inner membrane. The enzyme catalyses 4-amino-4-deoxy-alpha-L-arabinopyranosyl di-trans,octa-cis-undecaprenyl phosphate + lipid IVA = lipid IIA + di-trans,octa-cis-undecaprenyl phosphate.. The protein operates within lipopolysaccharide metabolism; 4-amino-4-deoxy-beta-L-arabinose-lipid A biosynthesis. Functionally, catalyzes the transfer of the L-Ara4N moiety of the glycolipid undecaprenyl phosphate-alpha-L-Ara4N to lipid A. The modified arabinose is attached to lipid A and is required for resistance to polymyxin and cationic antimicrobial peptides. This Enterobacter sp. (strain 638) protein is Undecaprenyl phosphate-alpha-4-amino-4-deoxy-L-arabinose arabinosyl transferase.